The primary structure comprises 328 residues: Malate dehydrogenase 1 (328 aa).

12 to 18 contributes to the NAD(+) binding site; the sequence is GAAGQIA. Positions 93 and 99 each coordinate substrate. Residues asparagine 106, glutamine 113, and 130-132 each bind NAD(+); that span reads VGN. Substrate contacts are provided by asparagine 132 and arginine 163. Histidine 188 acts as the Proton acceptor in catalysis.

Belongs to the LDH/MDH superfamily. MDH type 2 family.

It catalyses the reaction (S)-malate + NAD(+) = oxaloacetate + NADH + H(+). Functionally, catalyzes the reversible oxidation of malate to oxaloacetate. The chain is Malate dehydrogenase 1 from Burkholderia vietnamiensis (strain G4 / LMG 22486) (Burkholderia cepacia (strain R1808)).